Here is a 476-residue protein sequence, read N- to C-terminus: Aspartyl/glutamyl-tRNA(Asn/Gln) amidotransferase subunit B (476 aa).

It belongs to the GatB/GatE family. GatB subfamily. Heterotrimer of A, B and C subunits.

The enzyme catalyses L-glutamyl-tRNA(Gln) + L-glutamine + ATP + H2O = L-glutaminyl-tRNA(Gln) + L-glutamate + ADP + phosphate + H(+). It catalyses the reaction L-aspartyl-tRNA(Asn) + L-glutamine + ATP + H2O = L-asparaginyl-tRNA(Asn) + L-glutamate + ADP + phosphate + 2 H(+). Its function is as follows. Allows the formation of correctly charged Asn-tRNA(Asn) or Gln-tRNA(Gln) through the transamidation of misacylated Asp-tRNA(Asn) or Glu-tRNA(Gln) in organisms which lack either or both of asparaginyl-tRNA or glutaminyl-tRNA synthetases. The reaction takes place in the presence of glutamine and ATP through an activated phospho-Asp-tRNA(Asn) or phospho-Glu-tRNA(Gln). The polypeptide is Aspartyl/glutamyl-tRNA(Asn/Gln) amidotransferase subunit B (Neisseria meningitidis serogroup C (strain 053442)).